Reading from the N-terminus, the 183-residue chain is Translocon-associated protein subunit beta (183 aa).

Residues 1–17 (MRLLAVVVLALLAVSQA) form the signal peptide. The Lumenal portion of the chain corresponds to 18-146 (EEGARLLASK…REFDRRFSPH (129 aa)). The N-linked (GlcNAc...) (high mannose) asparagine glycan is linked to asparagine 88. The N-linked (GlcNAc...) asparagine glycan is linked to asparagine 104. A helical membrane pass occupies residues 147 to 167 (FLDWAAFGVMTLPSIGIPLLL). Residues 168–183 (WYSSKRKYDTPKPKKN) lie on the Cytoplasmic side of the membrane.

The protein belongs to the TRAP-beta family. In terms of assembly, heterotetramer of TRAP-alpha, TRAP-beta, TRAP-delta and TRAP-gamma. Interacts with STING1.

It localises to the endoplasmic reticulum membrane. Functionally, TRAP proteins are part of a complex whose function is to bind calcium to the ER membrane and thereby regulate the retention of ER resident proteins. The polypeptide is Translocon-associated protein subunit beta (Ssr2) (Mus musculus (Mouse)).